The chain runs to 205 residues: Probable GTP-binding protein EngB (205 aa).

An EngB-type G domain is found at 27-201 (QGMEVAFAGR…QNKLNAWFSG (175 aa)). GTP is bound by residues 35 to 42 (GRSNAGKS), 62 to 66 (GRTQL), 80 to 83 (DLPG), 147 to 150 (TKVD), and 180 to 182 (FSS). Mg(2+) contacts are provided by Ser42 and Thr64.

It belongs to the TRAFAC class TrmE-Era-EngA-EngB-Septin-like GTPase superfamily. EngB GTPase family. It depends on Mg(2+) as a cofactor.

In terms of biological role, necessary for normal cell division and for the maintenance of normal septation. This chain is Probable GTP-binding protein EngB, found in Hamiltonella defensa subsp. Acyrthosiphon pisum (strain 5AT).